The chain runs to 206 residues: Large ribosomal subunit protein eL13 (206 aa).

Residues 184–193 are compositionally biased toward basic and acidic residues; the sequence is EKTNQKWDGK. Residues 184–206 form a disordered region; that stretch reads EKTNQKWDGKRKAKAQAAAEPKA.

The protein belongs to the eukaryotic ribosomal protein eL13 family.

The polypeptide is Large ribosomal subunit protein eL13 (RPL13) (Tetrahymena thermophila (strain SB210)).